A 635-amino-acid chain; its full sequence is Threonine--tRNA ligase (635 aa).

Residues 1–61 (MISIRLKDGS…KEDGCLELLD (61 aa)) form the TGS domain. The interval 242–532 (DHRRLGRELG…LTEHFGGAFP (291 aa)) is catalytic. The Zn(2+) site is built by Cys333, His384, and His509.

Belongs to the class-II aminoacyl-tRNA synthetase family. As to quaternary structure, homodimer. It depends on Zn(2+) as a cofactor.

The protein resides in the cytoplasm. The catalysed reaction is tRNA(Thr) + L-threonine + ATP = L-threonyl-tRNA(Thr) + AMP + diphosphate + H(+). Functionally, catalyzes the attachment of threonine to tRNA(Thr) in a two-step reaction: L-threonine is first activated by ATP to form Thr-AMP and then transferred to the acceptor end of tRNA(Thr). Also edits incorrectly charged L-seryl-tRNA(Thr). The protein is Threonine--tRNA ligase of Syntrophomonas wolfei subsp. wolfei (strain DSM 2245B / Goettingen).